Consider the following 406-residue polypeptide: 12S rRNA N(4)-cytidine methyltransferase METTL15 (406 aa).

A mitochondrion-targeting transit peptide spans 1-22; sequence MLRYPYFYRTYNRLFSHFVDSG. S-adenosyl-L-methionine is bound by residues 100-102, D119, F146, D169, and Q176; that span reads GGH. A Phosphoserine modification is found at S358.

It belongs to the methyltransferase superfamily. RsmH family.

The protein localises to the mitochondrion matrix. The catalysed reaction is cytidine(839) in 12S rRNA + S-adenosyl-L-methionine = N(4)-methylcytidine(839) in 12S rRNA + S-adenosyl-L-homocysteine + H(+). Functionally, N4-methylcytidine (m4C) methyltransferase responsible for the methylation of position C839 in mitochondrial 12S rRNA. Involved in the stabilization of 12S rRNA folding, therefore facilitating the assembly of the mitochondrial small ribosomal subunits. This Mus musculus (Mouse) protein is 12S rRNA N(4)-cytidine methyltransferase METTL15.